The chain runs to 347 residues: Phosphoribosylformylglycinamidine cyclo-ligase (347 aa).

It belongs to the AIR synthase family.

Its subcellular location is the cytoplasm. It catalyses the reaction 2-formamido-N(1)-(5-O-phospho-beta-D-ribosyl)acetamidine + ATP = 5-amino-1-(5-phospho-beta-D-ribosyl)imidazole + ADP + phosphate + H(+). It participates in purine metabolism; IMP biosynthesis via de novo pathway; 5-amino-1-(5-phospho-D-ribosyl)imidazole from N(2)-formyl-N(1)-(5-phospho-D-ribosyl)glycinamide: step 2/2. The protein is Phosphoribosylformylglycinamidine cyclo-ligase of Alkaliphilus metalliredigens (strain QYMF).